The primary structure comprises 394 residues: S-adenosylmethionine synthase (394 aa).

Residue E10 participates in Mg(2+) binding. H16 is an ATP binding site. K(+) is bound at residue E44. Residues E57 and Q100 each contribute to the L-methionine site. ATP is bound by residues 168-170 (DGK), 236-239 (SGRF), D247, 253-254 (RK), A270, K274, and K278. D247 is a binding site for L-methionine. An L-methionine-binding site is contributed by K278.

This sequence belongs to the AdoMet synthase family. In terms of assembly, homotetramer. It depends on Mn(2+) as a cofactor. The cofactor is Mg(2+). Co(2+) is required as a cofactor. Requires K(+) as cofactor.

The protein localises to the cytoplasm. It carries out the reaction L-methionine + ATP + H2O = S-adenosyl-L-methionine + phosphate + diphosphate. The protein operates within amino-acid biosynthesis; S-adenosyl-L-methionine biosynthesis; S-adenosyl-L-methionine from L-methionine: step 1/1. Its function is as follows. Catalyzes the formation of S-adenosylmethionine from methionine and ATP. The reaction comprises two steps that are both catalyzed by the same enzyme: formation of S-adenosylmethionine (AdoMet) and triphosphate, and subsequent hydrolysis of the triphosphate. In Medicago truncatula (Barrel medic), this protein is S-adenosylmethionine synthase (METK).